Reading from the N-terminus, the 451-residue chain is Adenylyltransferase and sulfurtransferase MOCS3-2 (451 aa).

Positions 42–62 (GEDSDEAEESSNDMPTPQTKL) are disordered. The segment covering 43-52 (EDSDEAEESS) has biased composition (acidic residues). Thr60 bears the Phosphothreonine mark. Residues Gly99, Asp120, 127 to 131 (SNLHR), Lys144, and 188 to 189 (DN) each bind ATP. Zn(2+) is bound by residues Cys229 and Cys232. The Glycyl thioester intermediate; for adenylyltransferase activity role is filled by Cys246. The Zn(2+) site is built by Cys304 and Cys307. In terms of domain architecture, Rhodanese spans 353 to 449 (QSQPHLLLDV…WTGSVDATFP (97 aa)). Cys408 serves as the catalytic Cysteine persulfide intermediate; for sulfurtransferase activity.

This sequence in the N-terminal section; belongs to the HesA/MoeB/ThiF family. UBA4 subfamily. It depends on Zn(2+) as a cofactor.

Its subcellular location is the cytoplasm. It catalyses the reaction [molybdopterin-synthase sulfur-carrier protein]-C-terminal Gly-Gly + ATP + H(+) = [molybdopterin-synthase sulfur-carrier protein]-C-terminal Gly-Gly-AMP + diphosphate. The catalysed reaction is [molybdopterin-synthase sulfur-carrier protein]-C-terminal Gly-Gly-AMP + S-sulfanyl-L-cysteinyl-[cysteine desulfurase] + AH2 = [molybdopterin-synthase sulfur-carrier protein]-C-terminal-Gly-aminoethanethioate + L-cysteinyl-[cysteine desulfurase] + A + AMP + 2 H(+). It participates in tRNA modification; 5-methoxycarbonylmethyl-2-thiouridine-tRNA biosynthesis. It functions in the pathway cofactor biosynthesis; molybdopterin biosynthesis. In terms of biological role, plays a central role in 2-thiolation of mcm(5)S(2)U at tRNA wobble positions of cytosolic tRNA(Lys), tRNA(Glu) and tRNA(Gln). Also essential during biosynthesis of the molybdenum cofactor. Acts by mediating the C-terminal thiocarboxylation of sulfur carriers URM1 and MOCS2A. Its N-terminus first activates URM1 and MOCS2A as acyl-adenylates (-COAMP), then the persulfide sulfur on the catalytic cysteine is transferred to URM1 and MOCS2A to form thiocarboxylation (-COSH) of their C-terminus. The reaction probably involves hydrogen sulfide that is generated from the persulfide intermediate and that acts as a nucleophile towards URM1 and MOCS2A. Subsequently, a transient disulfide bond is formed. Does not use thiosulfate as sulfur donor; NFS1 probably acting as a sulfur donor for thiocarboxylation reactions. The chain is Adenylyltransferase and sulfurtransferase MOCS3-2 from Drosophila pseudoobscura pseudoobscura (Fruit fly).